A 38-amino-acid chain; its full sequence is Cytochrome b6-f complex subunit 5 (38 aa).

A helical membrane pass occupies residues 5–25 (LVLGLVMGLVPITLAGLFVAA).

Belongs to the PetG family. As to quaternary structure, the 4 large subunits of the cytochrome b6-f complex are cytochrome b6, subunit IV (17 kDa polypeptide, PetD), cytochrome f and the Rieske protein, while the 4 small subunits are PetG, PetL, PetM and PetN. The complex functions as a dimer.

The protein localises to the cellular thylakoid membrane. Component of the cytochrome b6-f complex, which mediates electron transfer between photosystem II (PSII) and photosystem I (PSI), cyclic electron flow around PSI, and state transitions. PetG is required for either the stability or assembly of the cytochrome b6-f complex. This is Cytochrome b6-f complex subunit 5 from Gloeothece citriformis (strain PCC 7424) (Cyanothece sp. (strain PCC 7424)).